A 194-amino-acid chain; its full sequence is Large ribosomal subunit protein uL22 (194 aa).

Belongs to the universal ribosomal protein uL22 family.

This Aspergillus fumigatus (strain ATCC MYA-4609 / CBS 101355 / FGSC A1100 / Af293) (Neosartorya fumigata) protein is Large ribosomal subunit protein uL22 (rpl17).